A 327-amino-acid polypeptide reads, in one-letter code: MTITTINIPSLTPHPCVEYWSVCKVEALFETPFLELVYQAAQVHRKHFNPQTIQLSTLMSIKTGGCPEDCSYCPQSARYHTGVQNQQLLCVEEIVEKAKIAKSRGAGRFCMGAAWRGPKPKDIGKITEIIKAVKDLGLETCGTFGLLQDGMAEELKEAGLDYYNHNIDTAPEHYKEIIGTRDFDDRLNTLGKIRKAGLKVCCGGIVGMNETRKERAGLIASLANLDPQPESVPINQLVKVEGTPLADAQELDWTEFVRTIAVARITMPKSYVRLSAGRQGMSEEMQAMCFMAGANSIFYGDKLLVTVNPEEDGDQLLMAKLDLKPET.

The Radical SAM core domain occupies 51-278 (QTIQLSTLMS…KSYVRLSAGR (228 aa)). 3 residues coordinate [4Fe-4S] cluster: Cys-66, Cys-70, and Cys-73. Residues Cys-110, Cys-141, Cys-201, and Arg-273 each coordinate [2Fe-2S] cluster.

It belongs to the radical SAM superfamily. Biotin synthase family. As to quaternary structure, homodimer. [4Fe-4S] cluster is required as a cofactor. Requires [2Fe-2S] cluster as cofactor.

The catalysed reaction is (4R,5S)-dethiobiotin + (sulfur carrier)-SH + 2 reduced [2Fe-2S]-[ferredoxin] + 2 S-adenosyl-L-methionine = (sulfur carrier)-H + biotin + 2 5'-deoxyadenosine + 2 L-methionine + 2 oxidized [2Fe-2S]-[ferredoxin]. The protein operates within cofactor biosynthesis; biotin biosynthesis; biotin from 7,8-diaminononanoate: step 2/2. In terms of biological role, catalyzes the conversion of dethiobiotin (DTB) to biotin by the insertion of a sulfur atom into dethiobiotin via a radical-based mechanism. The polypeptide is Biotin synthase (Histophilus somni (strain 2336) (Haemophilus somnus)).